Here is a 223-residue protein sequence, read N- to C-terminus: Probable cell wall protein PGA61 (223 aa).

The N-terminal stretch at 1 to 16 (MKSGLLLAVILPVAFA) is a signal peptide. Residue asparagine 25 is glycosylated (N-linked (GlcNAc...) asparagine). The segment at 83 to 134 (GAPSSSSTPTSSTETTSSTEAETTEAETTEQPSSSTSSNTESSKTTILETPS) is disordered. Low complexity-rich tracts occupy residues 84-103 (APSS…STEA) and 111-128 (TEQP…SKTT). Asparagine 188 is a glycosylation site (N-linked (GlcNAc...) asparagine). Residue asparagine 202 is the site of GPI-anchor amidated asparagine attachment. A propeptide spans 203 to 223 (GAGRAAVIGSGSLLALLLNFI) (removed in mature form).

The protein belongs to the IHD1 family. The GPI-anchor is attached to the protein in the endoplasmic reticulum and serves to target the protein to the cell surface. There, the glucosamine-inositol phospholipid moiety is cleaved off and the GPI-modified mannoprotein is covalently attached via its lipidless GPI glycan remnant to the 1,6-beta-glucan of the outer cell wall layer.

The protein localises to the secreted. Its subcellular location is the cell wall. It is found in the membrane. Its function is as follows. Probable GPI-anchored cell wall protein that may be involved in cell wall organization, hyphal growth, as well as in virulence. This Candida albicans (strain SC5314 / ATCC MYA-2876) (Yeast) protein is Probable cell wall protein PGA61 (PGA61).